A 179-amino-acid polypeptide reads, in one-letter code: UPF0303 protein P4H10.12 (179 aa).

This sequence belongs to the UPF0303 family.

The chain is UPF0303 protein P4H10.12 from Schizosaccharomyces pombe (strain 972 / ATCC 24843) (Fission yeast).